Here is a 308-residue protein sequence, read N- to C-terminus: MAWAMDNAILETILQRVRPLIGQGKVAAYIPALASVEGSKLGIAICTVDGQHYQAGDAHERFSIQSISKVLSLVVTMRHYPEEEIWQRVGKDPSGSPFNSLVQLEMEQGIPRNPFINAGALVVCDMLQGRLSAPRQRMLEVVRALCGVSDITYDATVARSEFEHSARNAAIAWLMKSFGNFHHDVPTVLQNYFHYCALKMSCMELARTFVFLANQGEAFHLDEPVVTPMQARQINALMATSGMYQNAGEFAWRVGLPAKSGVGGGIVAIVPHEMAIAVWSPELDPAGNSLAGIAALEQLTQTLGRSVY.

Substrate is bound by residues serine 66, asparagine 117, glutamate 161, asparagine 168, tyrosine 192, tyrosine 244, and valine 262.

The protein belongs to the glutaminase family. In terms of assembly, homotetramer.

The catalysed reaction is L-glutamine + H2O = L-glutamate + NH4(+). This Salmonella dublin (strain CT_02021853) protein is Glutaminase.